The following is an 881-amino-acid chain: Putative leucine-rich repeat receptor-like protein kinase At2g19210 (881 aa).

Residues 1–25 (MVHYNFLSLIIFACFFAVFVLLVRA) form the signal peptide. The Extracellular segment spans residues 26 to 518 (QDQSGFVSID…SDEKTKKNVY (493 aa)). Residues asparagine 143, asparagine 234, asparagine 295, asparagine 310, asparagine 404, asparagine 419, asparagine 435, asparagine 446, and asparagine 462 are each glycosylated (N-linked (GlcNAc...) asparagine). 2 LRR repeats span residues 438–460 (LLHILDLSNNSLTGKIPDFLGNL) and 462–483 (NLTELNLEGNKLSGAIPVKLLE). A helical membrane pass occupies residues 519 to 539 (IIPLVASVVGVLGLVLAIALF). Residues 540 to 881 (LLYKKRHRRG…FDSGMFPQAR (342 aa)) are Cytoplasmic-facing. One can recognise a Protein kinase domain in the interval 576-850 (NNFERVLGQG…HVVAELKESV (275 aa)). Residues 582–590 (LGQGGFGKV) and lysine 603 contribute to the ATP site. Tyrosine 648 carries the phosphotyrosine modification. The Proton acceptor role is filled by aspartate 699. 2 positions are modified to phosphothreonine: threonine 734 and threonine 739. Phosphotyrosine is present on tyrosine 747. The disordered stretch occupies residues 851 to 881 (SRARAGGGSGASSVTDPAMTNFDSGMFPQAR).

It belongs to the protein kinase superfamily. Ser/Thr protein kinase family.

It is found in the cell membrane. It carries out the reaction L-seryl-[protein] + ATP = O-phospho-L-seryl-[protein] + ADP + H(+). It catalyses the reaction L-threonyl-[protein] + ATP = O-phospho-L-threonyl-[protein] + ADP + H(+). This chain is Putative leucine-rich repeat receptor-like protein kinase At2g19210, found in Arabidopsis thaliana (Mouse-ear cress).